A 548-amino-acid polypeptide reads, in one-letter code: Inosine-5'-monophosphate dehydrogenase (548 aa).

2 CBS domains span residues 121-201 (FILD…EDPV) and 205-261 (MSTE…PLAS). Residues 298-300 (DSS) and 348-350 (GMG) each bind NAD(+). Residues Gly350 and Gly352 each coordinate K(+). Position 353 (Ser353) interacts with IMP. Cys355 is a binding site for K(+). Cys355 serves as the catalytic Thioimidate intermediate. IMP is bound by residues 388-390 (DGG) and 411-412 (GS). Arg461 (proton acceptor) is an active-site residue. Gln473 lines the IMP pocket. Residues 527-548 (ASAQTEGNVHGLHSHEKKLYSS) are disordered. Ser528 contacts K(+). Basic and acidic residues predominate over residues 539 to 548 (HSHEKKLYSS).

This sequence belongs to the IMPDH/GMPR family. In terms of assembly, homotetramer. K(+) serves as cofactor.

The protein resides in the cytoplasm. The enzyme catalyses IMP + NAD(+) + H2O = XMP + NADH + H(+). It participates in purine metabolism; XMP biosynthesis via de novo pathway; XMP from IMP: step 1/1. Its activity is regulated as follows. Mycophenolic acid (MPA) is a non-competitive inhibitor that prevents formation of the closed enzyme conformation by binding to the same site as the amobile flap. In contrast, mizoribine monophosphate (MZP) is a competitive inhibitor that induces the closed conformation. MPA is a potent inhibitor of mammalian IMPDHs but a poor inhibitor of the bacterial enzymes. MZP is a more potent inhibitor of bacterial IMPDH. Its function is as follows. Catalyzes the conversion of inosine 5'-phosphate (IMP) to xanthosine 5'-phosphate (XMP), the first committed and rate-limiting step in the de novo synthesis of guanine nucleotides, and therefore plays an important role in the regulation of cell growth. Part of the gene cluster that mediates the biosynthesis of mycophenolic acid (MPA), the first isolated antibiotic natural product in the world. Does not play a role in the biosynthesis of MPA, but is involved in self resistance to MPA, since MPA acts as an inhibitor of IMP dehydrogenases. The polypeptide is Inosine-5'-monophosphate dehydrogenase (Penicillium brevicompactum).